Here is a 479-residue protein sequence, read N- to C-terminus: ATP-dependent protease ATPase subunit HslU (479 aa).

ATP is bound by residues I32, 74 to 79 (GVGKTE), D290, E355, and R427.

The protein belongs to the ClpX chaperone family. HslU subfamily. In terms of assembly, a double ring-shaped homohexamer of HslV is capped on each side by a ring-shaped HslU homohexamer. The assembly of the HslU/HslV complex is dependent on binding of ATP.

The protein resides in the cytoplasm. In terms of biological role, ATPase subunit of a proteasome-like degradation complex; this subunit has chaperone activity. The binding of ATP and its subsequent hydrolysis by HslU are essential for unfolding of protein substrates subsequently hydrolyzed by HslV. HslU recognizes the N-terminal part of its protein substrates and unfolds these before they are guided to HslV for hydrolysis. The chain is ATP-dependent protease ATPase subunit HslU from Leptospira interrogans serogroup Icterohaemorrhagiae serovar Lai (strain 56601).